A 31-amino-acid chain; its full sequence is Delta-actitoxin-Dar1b (31 aa).

This sequence belongs to the sea anemone short toxin (type III) family. In terms of processing, contains 4 disulfide bonds.

It localises to the secreted. It is found in the nematocyst. In terms of biological role, binds specifically to voltage-gated sodium channels (Nav), thereby delaying their inactivation during signal transduction. This chain is Delta-actitoxin-Dar1b, found in Dofleinia armata (Armed anemone).